Consider the following 193-residue polypeptide: Ribosome maturation factor RimM (193 aa).

The PRC barrel domain maps to 112 to 193 (VDEYYWIDLI…CITVDWGLDF (82 aa)).

This sequence belongs to the RimM family. As to quaternary structure, binds ribosomal protein uS19.

Its subcellular location is the cytoplasm. Its function is as follows. An accessory protein needed during the final step in the assembly of 30S ribosomal subunit, possibly for assembly of the head region. Essential for efficient processing of 16S rRNA. May be needed both before and after RbfA during the maturation of 16S rRNA. It has affinity for free ribosomal 30S subunits but not for 70S ribosomes. This Methylibium petroleiphilum (strain ATCC BAA-1232 / LMG 22953 / PM1) protein is Ribosome maturation factor RimM.